The primary structure comprises 400 residues: Phosphoglycerate kinase (400 aa).

Residues 22–24, Arg-38, 61–64, Arg-119, and Arg-152 each bind substrate; these read DFN and HLGR. ATP contacts are provided by residues Lys-205, Gly-296, Glu-327, and 353–356; that span reads GGDT.

It belongs to the phosphoglycerate kinase family. In terms of assembly, monomer.

It localises to the cytoplasm. It catalyses the reaction (2R)-3-phosphoglycerate + ATP = (2R)-3-phospho-glyceroyl phosphate + ADP. Its pathway is carbohydrate degradation; glycolysis; pyruvate from D-glyceraldehyde 3-phosphate: step 2/5. The sequence is that of Phosphoglycerate kinase from Campylobacter lari (strain RM2100 / D67 / ATCC BAA-1060).